The sequence spans 398 residues: Probable transcription factor PosF21 (398 aa).

2 disordered regions span residues 1-46 and 112-150; these read MDKE…HDIS and ATSSAQVGEPSGTAWKNETMMQTGTGSTSNPQNTVNSLG. Residues 7 to 19 are compositionally biased toward pro residues; it reads PAPPCGGLPPPSP. A compositionally biased stretch (polar residues) spans 125 to 148; the sequence is AWKNETMMQTGTGSTSNPQNTVNS. The 64-residue stretch at 201–264 folds into the bZIP domain; it reads DPKRAKRIWA…NGLTVENNEL (64 aa). The tract at residues 203-224 is basic motif; that stretch reads KRAKRIWANRQSAARSKERKTR. The leucine-zipper stretch occupies residues 229–264; the sequence is LERKVQTLQTEATTLSAQLTLLQRDTNGLTVENNEL.

The protein belongs to the bZIP family.

It is found in the nucleus. In terms of biological role, putative transcription factor with an activatory role. This chain is Probable transcription factor PosF21 (POSF21), found in Arabidopsis thaliana (Mouse-ear cress).